Here is a 469-residue protein sequence, read N- to C-terminus: Signal recognition particle 54 kDa protein (469 aa).

Residues 104-111 (GLYGSGKT), 184-188 (DTAGR), and 242-245 (TKLD) each bind GTP. 2 disordered regions span residues 388-410 (ELEN…SGKP) and 447-469 (QQGG…PFGD). Residues 448-469 (QGGGGGGGMGGMGGGGMGPFGD) are compositionally biased toward gly residues.

The protein belongs to the GTP-binding SRP family. SRP54 subfamily. In terms of assembly, part of the signal recognition particle protein translocation system, which is composed of SRP and FtsY. Archaeal SRP consists of a 7S RNA molecule of 300 nucleotides and two protein subunits: SRP54 and SRP19.

The protein localises to the cytoplasm. It carries out the reaction GTP + H2O = GDP + phosphate + H(+). In terms of biological role, involved in targeting and insertion of nascent membrane proteins into the cytoplasmic membrane. Binds to the hydrophobic signal sequence of the ribosome-nascent chain (RNC) as it emerges from the ribosomes. The SRP-RNC complex is then targeted to the cytoplasmic membrane where it interacts with the SRP receptor FtsY. The chain is Signal recognition particle 54 kDa protein from Haloarcula marismortui (strain ATCC 43049 / DSM 3752 / JCM 8966 / VKM B-1809) (Halobacterium marismortui).